A 238-amino-acid chain; its full sequence is DNA repair protein RecO (238 aa).

This sequence belongs to the RecO family.

In terms of biological role, involved in DNA repair and RecF pathway recombination. This chain is DNA repair protein RecO, found in Aliivibrio fischeri (strain ATCC 700601 / ES114) (Vibrio fischeri).